Consider the following 895-residue polypeptide: Eukaryotic translation initiation factor 3 subunit C (895 aa).

Residues 1–108 (MSGFFRKVGD…DSDSEEEVKK (108 aa)) form a disordered region. 2 stretches are compositionally biased toward acidic residues: residues 11-31 (SDSE…ESGD) and 52-75 (DDSD…DDDN). In terms of domain architecture, PCI spans 638–812 (FHMHINLELL…NVVSFHRLEL (175 aa)). Residues 838–860 (DAKLGEGKEQRSGAGGERGDREG) show a composition bias toward basic and acidic residues. Residues 838–895 (DAKLGEGKEQRSGAGGERGDREGGQPGGRRERRGGSAARGRGRGRGRAQQFQALGQKV) are disordered. The span at 884–895 (RAQQFQALGQKV) shows a compositional bias: low complexity.

The protein belongs to the eIF-3 subunit C family. In terms of assembly, component of the eukaryotic translation initiation factor 3 (eIF-3) complex.

It localises to the cytoplasm. Component of the eukaryotic translation initiation factor 3 (eIF-3) complex, which is involved in protein synthesis of a specialized repertoire of mRNAs and, together with other initiation factors, stimulates binding of mRNA and methionyl-tRNAi to the 40S ribosome. The eIF-3 complex specifically targets and initiates translation of a subset of mRNAs involved in cell proliferation. The protein is Eukaryotic translation initiation factor 3 subunit C of Mycosarcoma maydis (Corn smut fungus).